Reading from the N-terminus, the 108-residue chain is MIYPILIFILAGLCEIGGGYLIWLWLRASQSPLFGLLGGILLISYGIVATFQVFPTFSRVYAAYGGVFIVMSILWGYVFDKQTPDKYDVLGAIVCIIGVLIMLLPDRS.

A run of 4 helical transmembrane segments spans residues 5–25 (ILIF…IWLW), 34–54 (FGLL…FQVF), 60–80 (VYAA…YVFD), and 84–104 (PDKY…IMLL).

This sequence belongs to the UPF0060 family.

The protein localises to the cell membrane. This Staphylococcus carnosus (strain TM300) protein is UPF0060 membrane protein Sca_1835.